A 153-amino-acid polypeptide reads, in one-letter code: Putative WASP homolog-associated protein with actin, membranes and microtubules-like protein 1 (153 aa).

The stretch at 113–151 (AIQFYEIQLELYEVKFEILKNKEILLTTQLDSLERLIKD) forms a coiled coil.

The sequence is that of Putative WASP homolog-associated protein with actin, membranes and microtubules-like protein 1 (WHAMMP3) from Homo sapiens (Human).